Consider the following 428-residue polypeptide: Adenylosuccinate synthetase (428 aa).

GTP-binding positions include 12–18 (GDEGKGK) and 40–42 (GHT). The active-site Proton acceptor is Asp13. Asp13 and Gly40 together coordinate Mg(2+). IMP contacts are provided by residues 13–16 (DEGK), 38–41 (NAGH), Thr130, Arg144, Gln225, Thr240, and Arg304. His41 functions as the Proton donor in the catalytic mechanism. A substrate-binding site is contributed by 300–306 (VTTGRAR). Residues Arg306, 332-334 (KID), and 414-416 (SVG) contribute to the GTP site.

This sequence belongs to the adenylosuccinate synthetase family. As to quaternary structure, homodimer. It depends on Mg(2+) as a cofactor.

It localises to the cytoplasm. It carries out the reaction IMP + L-aspartate + GTP = N(6)-(1,2-dicarboxyethyl)-AMP + GDP + phosphate + 2 H(+). It functions in the pathway purine metabolism; AMP biosynthesis via de novo pathway; AMP from IMP: step 1/2. Plays an important role in the de novo pathway of purine nucleotide biosynthesis. Catalyzes the first committed step in the biosynthesis of AMP from IMP. The polypeptide is Adenylosuccinate synthetase (Clostridium botulinum (strain Loch Maree / Type A3)).